The following is a 428-amino-acid chain: Cytochrome bc complex cytochrome b subunit (428 aa).

2 stretches are compositionally biased toward low complexity: residues 1–15 (MAEN…TAPA) and 21–52 (APGA…AAAP). The interval 1–72 (MAENTPKPAA…RPDPNPFKDS (72 aa)) is disordered. Residues 59-72 (PPVDRPDPNPFKDS) are compositionally biased toward basic and acidic residues. A helical membrane pass occupies residues 110–130 (YFGGLGLFFFVIQILTGLLLL). Heme b contacts are provided by His161 and His175. The next 6 membrane-spanning stretches (helical) occupy residues 162–182 (AWSA…TFFM), 193–213 (WVSG…GYLL), 260–280 (LHVV…LTLV), 312–331 (GIGW…MFPW), 369–389 (ELLA…VPFI), and 401–421 (IFTI…YRVY). 2 residues coordinate heme b: His261 and His276.

It belongs to the cytochrome b family. Heme b is required as a cofactor.

The protein localises to the cell inner membrane. In terms of biological role, component of the green S-bacteria bc complex, which consists of the Rieske protein and cytochrome b subunit but appears to lack a cytochrome c1-equivalent. This complex has a comparatively low redox potential. The polypeptide is Cytochrome bc complex cytochrome b subunit (petB) (Chlorobaculum thiosulfatiphilum (Chlorobium limicola f.sp. thiosulfatophilum)).